The sequence spans 221 residues: MDTLDELLPREKMLRSGIASLSDVELLALFLRTGTPGKDVMTLAKEILQHFGSLYGLLSADFAQFRGVNGIGLAKFAQLKGIAELARRYYSVRMNEESALLSPEMTREFLQSQLTGEEREIFLVIFLDAQHRVLQHSRLFSGTLNHVEVHPREIVREAIKLNASAVILAHNHPSGCAEPSKADKLITERVIKCCQFMDIRVLDHLIIGRGEYVSFAERGWI.

Positions 99-221 (ALLSPEMTRE…YVSFAERGWI (123 aa)) constitute an MPN domain. Zn(2+) contacts are provided by H170, H172, and D183. The short motif at 170–183 (HNHPSGCAEPSKAD) is the JAMM motif element.

The protein belongs to the UPF0758 family. YicR subfamily.

This is UPF0758 protein YicR from Salmonella agona (strain SL483).